A 194-amino-acid polypeptide reads, in one-letter code: GTP cyclohydrolase 1 (194 aa).

3 residues coordinate Zn(2+): Cys83, His86, and Cys155.

The protein belongs to the GTP cyclohydrolase I family. Toroid-shaped homodecamer, composed of two pentamers of five dimers.

It carries out the reaction GTP + H2O = 7,8-dihydroneopterin 3'-triphosphate + formate + H(+). It functions in the pathway cofactor biosynthesis; 7,8-dihydroneopterin triphosphate biosynthesis; 7,8-dihydroneopterin triphosphate from GTP: step 1/1. The sequence is that of GTP cyclohydrolase 1 from Streptococcus pyogenes serotype M5 (strain Manfredo).